A 289-amino-acid chain; its full sequence is 3-methyl-2-oxobutanoate hydroxymethyltransferase (289 aa).

Asp-50 and Asp-89 together coordinate Mg(2+). Residues 50–51 (DS), Asp-89, and Lys-119 contribute to the 3-methyl-2-oxobutanoate site. Position 121 (Glu-121) interacts with Mg(2+). The active-site Proton acceptor is the Glu-188. The disordered stretch occupies residues 266–289 (AQHSFGMPEDEQRRWEENVSGADD).

Belongs to the PanB family. In terms of assembly, homodecamer; pentamer of dimers. Mg(2+) serves as cofactor.

It localises to the cytoplasm. It carries out the reaction 3-methyl-2-oxobutanoate + (6R)-5,10-methylene-5,6,7,8-tetrahydrofolate + H2O = 2-dehydropantoate + (6S)-5,6,7,8-tetrahydrofolate. Its pathway is cofactor biosynthesis; (R)-pantothenate biosynthesis; (R)-pantoate from 3-methyl-2-oxobutanoate: step 1/2. Catalyzes the reversible reaction in which hydroxymethyl group from 5,10-methylenetetrahydrofolate is transferred onto alpha-ketoisovalerate to form ketopantoate. The sequence is that of 3-methyl-2-oxobutanoate hydroxymethyltransferase from Oleidesulfovibrio alaskensis (strain ATCC BAA-1058 / DSM 17464 / G20) (Desulfovibrio alaskensis).